Reading from the N-terminus, the 319-residue chain is NADH-quinone oxidoreductase subunit H 2 (319 aa).

The next 9 membrane-spanning stretches (helical) occupy residues 1-21 (MIGMIITATISVALIMVLLVL), 77-97 (ILAPAVAATPVLAGFGVVAIG), 107-127 (VGLLFLLGMLGLTAYAAVLGA), 147-167 (LAYEVFLGLSLMGVVMIAGSF), 179-199 (VWFVVLQPLGMALFTIAGIAA), 214-234 (LIAGFITEYTGMSFGLFFLGE), 238-258 (VLLVSALAVTLFFGGWLGPWL), 262-282 (VWFGLKTAVIAVAFVWIRATL), and 293-313 (FAWKVALPLSLLNLMLTGIVV).

This sequence belongs to the complex I subunit 1 family. NDH-1 is composed of 14 different subunits. Subunits NuoA, H, J, K, L, M, N constitute the membrane sector of the complex.

Its subcellular location is the cell inner membrane. It catalyses the reaction a quinone + NADH + 5 H(+)(in) = a quinol + NAD(+) + 4 H(+)(out). Functionally, NDH-1 shuttles electrons from NADH, via FMN and iron-sulfur (Fe-S) centers, to quinones in the respiratory chain. The immediate electron acceptor for the enzyme in this species is believed to be ubiquinone. Couples the redox reaction to proton translocation (for every two electrons transferred, four hydrogen ions are translocated across the cytoplasmic membrane), and thus conserves the redox energy in a proton gradient. This subunit may bind ubiquinone. In Rhodopseudomonas palustris (strain ATCC BAA-98 / CGA009), this protein is NADH-quinone oxidoreductase subunit H 2.